A 411-amino-acid polypeptide reads, in one-letter code: MDWSHLWLYVSPPVLGGIIGYFTNDIAIKMLFRPYQAIYIAGRRVPFTPGLIPRNQERLALNISKTIMGSLLTPQELQNLARRLLQTERVQAAILWLLRLAIEQINTEKNEKSAKIVAGILRDLLGESLPRLLKVLARREDFLEAQINQIFDQILLEFQLSEEQATRLADWLLEVVLPPDMLRQAIVDFLTDRTIQIIDEGFREKTSGTYWVVANLFGLRNTLTRLRTFCLDEKEATNNRLQELTQDLQIRERIRKFLQNLSLQNLPMGTVRQLRKTTRESVRHYLQNSGSDFLQGLTDSVDWENIAVVLLNRLSTSSVVSTSLEVMSQELALILDKYLEKDLEIIVAQAIPILSIDQVIVDRVKSTSPADLEAAIEGIVKNELQAIVTLGGVLGFVIGLLQTVFLVLSQY.

2 helical membrane-spanning segments follow: residues 3 to 23 (WSHLWLYVSPPVLGGIIGYFT) and 387 to 407 (IVTLGGVLGFVIGLLQTVFLV).

The protein belongs to the UPF0754 family.

The protein resides in the cell inner membrane. This chain is UPF0754 membrane protein Npun_R4433, found in Nostoc punctiforme (strain ATCC 29133 / PCC 73102).